A 308-amino-acid polypeptide reads, in one-letter code: Putative lipid kinase SH2167 (308 aa).

The 139-residue stretch at 1–139 (MGQKFNHGVL…YDVMKVNGTY (139 aa)) folds into the DAGKc domain. ATP contacts are provided by residues Ser44, 74 to 80 (GDGTVNE), and Thr101. Positions 220, 223, and 225 each coordinate Mg(2+). Catalysis depends on Glu281, which acts as the Proton acceptor.

This sequence belongs to the diacylglycerol/lipid kinase family. Requires Mg(2+) as cofactor.

Functionally, may catalyze the ATP-dependent phosphorylation of lipids other than diacylglycerol (DAG). The polypeptide is Putative lipid kinase SH2167 (Staphylococcus haemolyticus (strain JCSC1435)).